The sequence spans 301 residues: Protein phosphatase 1 regulatory subunit 3B (301 aa).

Residues 79–82 carry the PP1-binding motif motif; that stretch reads RVSF. Positions 142-250 constitute a CBM21 domain; sequence RNRLQAESVC…SNKGLNYRIV (109 aa).

In terms of assembly, interacts with glycogen, PPP1CC catalytic subunit of PP1 and PYGL. Associates with glycogen particles. Forms complexes with debranching enzyme, glycogen phosphorylase, glycogen synthase and phosphorylase kinase which is necessary for its regulation of PP1 activity.

In terms of biological role, acts as a glycogen-targeting subunit for phosphatase PP1. Facilitates interaction of the PP1 with enzymes of the glycogen metabolism and regulates its activity. Suppresses the rate at which PP1 dephosphorylates (inactivates) glycogen phosphorylase and enhances the rate at which it activates glycogen synthase and therefore limits glycogen breakdown. The chain is Protein phosphatase 1 regulatory subunit 3B (ppp1r3b) from Xenopus tropicalis (Western clawed frog).